The sequence spans 154 residues: Terephthalate 1,2-dioxygenase, terminal oxygenase component subunit beta 1 (154 aa).

It belongs to the bacterial ring-hydroxylating dioxygenase beta subunit family. In terms of assembly, heterotetramer composed of 2 alpha (TphA2I and TphA2II) and 2 beta (TphA3I and TphA3II) subunits. Part of a multicomponent enzyme system composed of a reductase (TphA1I or TphA1II) and a two-subunit oxygenase component (TphA2I or TphA2II and TphA3I or TphA3II). Requires Fe cation as cofactor.

It carries out the reaction terephthalate + NADH + O2 + H(+) = (3S,4R)-3,4-dihydroxycyclohexa-1,5-diene-1,4-dicarboxylate + NAD(+). With respect to regulation, inhibited by EDTA. In terms of biological role, component of the terephthalate 1,2-dioxygenase multicomponent enzyme system which catalyzes the dioxygenation of terephthalate (TER/TPA) to 1,2-dihydroxy-3,5-cyclohexadiene-1,4-dicarboxylic acid (DCD). It can also use 2,5-dicarboxypyridine (PDC) and 1,4-napthalenedicarboxylic acid (NDC) as substrates, and preferentially uses NADPH which is the physiological electron donor. In Comamonas sp, this protein is Terephthalate 1,2-dioxygenase, terminal oxygenase component subunit beta 1 (tphA3I).